A 234-amino-acid polypeptide reads, in one-letter code: Phosphoglycolate phosphatase (234 aa).

Asp-8 (nucleophile) is an active-site residue. Residues Asp-8 and Asp-10 each coordinate Mg(2+). A substrate-binding site is contributed by Lys-155. Residues Asp-178 and Asp-182 each contribute to the Mg(2+) site.

Belongs to the archaeal SPP-like hydrolase family. Requires Mg(2+) as cofactor.

It carries out the reaction 2-phosphoglycolate + H2O = glycolate + phosphate. Its function is as follows. Catalyzes the dephosphorylation of 2-phosphoglycolate. The chain is Phosphoglycolate phosphatase from Thermococcus sibiricus (strain DSM 12597 / MM 739).